Reading from the N-terminus, the 182-residue chain is Ribulose bisphosphate carboxylase small subunit, chloroplastic 1 (182 aa).

A chloroplast-targeting transit peptide spans 1–42 (MASIMMNKSVVLSKECAKPLATPKVTLNKRGFATTIATKNRE).

This sequence belongs to the RuBisCO small chain family. In terms of assembly, heterohexadecamer of 8 large and 8 small subunits.

Its subcellular location is the plastid. It localises to the chloroplast. Functionally, ruBisCO catalyzes two reactions: the carboxylation of D-ribulose 1,5-bisphosphate, the primary event in carbon dioxide fixation, as well as the oxidative fragmentation of the pentose substrate. Both reactions occur simultaneously and in competition at the same active site. Although the small subunit is not catalytic it is essential for maximal activity. In Acetabularia acetabulum (Mermaid's wine glass), this protein is Ribulose bisphosphate carboxylase small subunit, chloroplastic 1.